A 406-amino-acid polypeptide reads, in one-letter code: Succinyl-diaminopimelate desuccinylase (406 aa).

A Zn(2+)-binding site is contributed by His95. Residue Asp97 is part of the active site. Position 128 (Asp128) interacts with Zn(2+). The active-site Proton acceptor is the Glu162. Glu163, Glu191, and His377 together coordinate Zn(2+).

The protein belongs to the peptidase M20A family. DapE subfamily. In terms of assembly, homodimer. Requires Zn(2+) as cofactor. It depends on Co(2+) as a cofactor.

It catalyses the reaction N-succinyl-(2S,6S)-2,6-diaminopimelate + H2O = (2S,6S)-2,6-diaminopimelate + succinate. It participates in amino-acid biosynthesis; L-lysine biosynthesis via DAP pathway; LL-2,6-diaminopimelate from (S)-tetrahydrodipicolinate (succinylase route): step 3/3. Functionally, catalyzes the hydrolysis of N-succinyl-L,L-diaminopimelic acid (SDAP), forming succinate and LL-2,6-diaminopimelate (DAP), an intermediate involved in the bacterial biosynthesis of lysine and meso-diaminopimelic acid, an essential component of bacterial cell walls. The protein is Succinyl-diaminopimelate desuccinylase of Polaromonas naphthalenivorans (strain CJ2).